The chain runs to 157 residues: S-ribosylhomocysteine lyase (157 aa).

The Fe cation site is built by histidine 54, histidine 58, and cysteine 126.

This sequence belongs to the LuxS family. Homodimer. Fe cation serves as cofactor.

The catalysed reaction is S-(5-deoxy-D-ribos-5-yl)-L-homocysteine = (S)-4,5-dihydroxypentane-2,3-dione + L-homocysteine. Functionally, involved in the synthesis of autoinducer 2 (AI-2) which is secreted by bacteria and is used to communicate both the cell density and the metabolic potential of the environment. The regulation of gene expression in response to changes in cell density is called quorum sensing. Catalyzes the transformation of S-ribosylhomocysteine (RHC) to homocysteine (HC) and 4,5-dihydroxy-2,3-pentadione (DPD). This chain is S-ribosylhomocysteine lyase, found in Bacillus pumilus (strain SAFR-032).